The following is a 393-amino-acid chain: DNA-directed RNA polymerase subunit Rpo1C (393 aa).

Belongs to the RNA polymerase beta' chain family. As to quaternary structure, part of the RNA polymerase complex.

It localises to the cytoplasm. The catalysed reaction is RNA(n) + a ribonucleoside 5'-triphosphate = RNA(n+1) + diphosphate. In terms of biological role, DNA-dependent RNA polymerase (RNAP) catalyzes the transcription of DNA into RNA using the four ribonucleoside triphosphates as substrates. Forms part of the jaw domain. In Thermococcus celer, this protein is DNA-directed RNA polymerase subunit Rpo1C.